A 439-amino-acid chain; its full sequence is Diaminopimelate decarboxylase (439 aa).

At Lys-66 the chain carries N6-(pyridoxal phosphate)lysine. Pyridoxal 5'-phosphate contacts are provided by residues Gly-248 and 290-293 (EPGR). Residues Arg-293, Arg-330, and Tyr-334 each coordinate substrate. Cys-361 (proton donor) is an active-site residue. Glu-362 and Tyr-390 together coordinate substrate. Tyr-390 contacts pyridoxal 5'-phosphate.

Belongs to the Orn/Lys/Arg decarboxylase class-II family. LysA subfamily. In terms of assembly, homodimer. It depends on pyridoxal 5'-phosphate as a cofactor.

The catalysed reaction is meso-2,6-diaminopimelate + H(+) = L-lysine + CO2. It participates in amino-acid biosynthesis; L-lysine biosynthesis via DAP pathway; L-lysine from DL-2,6-diaminopimelate: step 1/1. In terms of biological role, specifically catalyzes the decarboxylation of meso-diaminopimelate (meso-DAP) to L-lysine. The sequence is that of Diaminopimelate decarboxylase from Bacillus subtilis (strain 168).